The following is a 453-amino-acid chain: DNA repair protein RadA (453 aa).

The C4-type zinc-finger motif lies at 11–28 (CNQCGATAPKWLGQCPGC). ATP is bound at residue 93–100 (GDPGIGKS). The RadA KNRFG motif motif lies at 250–254 (KNRFG). A lon-protease-like region spans residues 349-453 (DVFLSITGGL…TIKDAIRLLL (105 aa)).

It belongs to the RecA family. RadA subfamily.

In terms of biological role, DNA-dependent ATPase involved in processing of recombination intermediates, plays a role in repairing DNA breaks. Stimulates the branch migration of RecA-mediated strand transfer reactions, allowing the 3' invading strand to extend heteroduplex DNA faster. Binds ssDNA in the presence of ADP but not other nucleotides, has ATPase activity that is stimulated by ssDNA and various branched DNA structures, but inhibited by SSB. Does not have RecA's homology-searching function. This chain is DNA repair protein RadA, found in Chlamydia pneumoniae (Chlamydophila pneumoniae).